The following is a 68-amino-acid chain: MSKLGVLLTICLLLFPLTAVPLDGDQPADRPAERMQDDISSERHPFFDRSKQCCHLPACRFGCTPCCW.

The first 19 residues, M1–A19, serve as a signal peptide directing secretion. Residues V20–R49 constitute a propeptide that is removed on maturation. 3 disulfide bridges follow: C53–C67, C54–C63, and C59–C66. P65 bears the 4-hydroxyproline mark.

Belongs to the conotoxin M superfamily. As to expression, expressed by the venom duct.

The protein localises to the secreted. In Conus marmoreus (Marble cone), this protein is Conotoxin Mr3.4.